Reading from the N-terminus, the 211-residue chain is 3-demethoxyubiquinol 3-hydroxylase (211 aa).

Glutamate 60, glutamate 90, histidine 93, glutamate 142, glutamate 174, and histidine 177 together coordinate Fe cation.

It belongs to the COQ7 family. The cofactor is Fe cation.

It is found in the cell membrane. It catalyses the reaction a 5-methoxy-2-methyl-3-(all-trans-polyprenyl)benzene-1,4-diol + AH2 + O2 = a 3-demethylubiquinol + A + H2O. It functions in the pathway cofactor biosynthesis; ubiquinone biosynthesis. In terms of biological role, catalyzes the hydroxylation of 2-nonaprenyl-3-methyl-6-methoxy-1,4-benzoquinol during ubiquinone biosynthesis. The protein is 3-demethoxyubiquinol 3-hydroxylase of Francisella tularensis subsp. tularensis (strain FSC 198).